A 582-amino-acid polypeptide reads, in one-letter code: TBCC domain-containing protein 1 (582 aa).

The segment covering 140-153 (EWPSPRSRSPSSSS) has biased composition (low complexity). A disordered region spans residues 140–159 (EWPSPRSRSPSSSSSERDAK). Residues 305 to 451 (PPGSRLVLMS…LWNQPLLFGV (147 aa)) enclose the C-CAP/cofactor C-like domain. Residues 547-558 (SLLPPTITPSSS) show a composition bias toward low complexity. The segment at 547 to 582 (SLLPPTITPSSSAEHWSSNQNTLKEQTHEQPTGTVC) is disordered. A compositionally biased stretch (polar residues) spans 559-582 (AEHWSSNQNTLKEQTHEQPTGTVC).

Belongs to the TBCC family.

It localises to the cytoplasm. The protein localises to the cytoskeleton. Its subcellular location is the microtubule organizing center. It is found in the centrosome. The protein resides in the spindle pole. Functionally, may play a role in the regulation of centrosome and Golgi apparatus positioning. The protein is TBCC domain-containing protein 1 (tbccd1) of Danio rerio (Zebrafish).